Reading from the N-terminus, the 352-residue chain is Probable cytosolic iron-sulfur protein assembly protein CIAO1 homolog (352 aa).

WD repeat units lie at residues 12–51 (ASNKRLWSLSWNHKGSVLISSGEDRVIKLWAKCNDQLWGS), 58–97 (AHKKSIRCVTWSPCGTYIASASFDGTVTIWKISEAHSAPE), 106–145 (GHTSEVKCVAWCPSGHLIATCGRDKSVWLWEFDDEEDVQC), 151–190 (PHSQDVKSVAWHPHGEVLVSTSYDNKINVYREELDDWTVF), 195–234 (GHDSTVWKAEFSPSGDILASCSDDLCVKLWSWEGVCGKSS), 245–284 (YHTRTIFDLNWSPDSQLLASCGSDNRLCIYKMPANGLTHI), and 303–352 (AHSE…EYEL).

The protein belongs to the WD repeat CIA1 family.

Functionally, essential component of the cytosolic iron-sulfur (Fe/S) protein assembly machinery. Required for the maturation of extramitochondrial Fe/S proteins. The sequence is that of Probable cytosolic iron-sulfur protein assembly protein CIAO1 homolog from Schistosoma japonicum (Blood fluke).